Reading from the N-terminus, the 268-residue chain is Undecaprenyl-diphosphatase (268 aa).

Transmembrane regions (helical) follow at residues 41-61, 81-101, 106-126, 146-166, 191-211, 213-233, and 245-265; these read LAYSLGLFLEAASVLAALIYF, WLTYVIVTTAATGAVGIPLYM, YLLLGASAGWLMVVLGVAVIF, MTLGHMALVGLAQALSVLPGI, FVLVPIAGLGATALAYLSEGG, VATPEVITAMLIGLVVSLVTI, and VTLVNIVVGTLAIAGGITRIL.

This sequence belongs to the UppP family.

The protein resides in the cell membrane. It carries out the reaction di-trans,octa-cis-undecaprenyl diphosphate + H2O = di-trans,octa-cis-undecaprenyl phosphate + phosphate + H(+). Functionally, catalyzes the dephosphorylation of undecaprenyl diphosphate (UPP). In Pyrobaculum islandicum (strain DSM 4184 / JCM 9189 / GEO3), this protein is Undecaprenyl-diphosphatase.